The sequence spans 139 residues: MSSEKEYVEMLDRLYSKLPEKGRKEGTQALPNLIIFNIGNTTMIRNFAEYCDRIRREDKICMKYLLKELAAPGNVDDKGELIIQGKFSSQVINTLMERFLKAYVECSTCKSLDTVLKKEKKSWYIVCLACGAQTPVKPL.

It belongs to the eIF-2-beta/eIF-5 family. As to quaternary structure, heterotrimer composed of an alpha, a beta and a gamma chain.

EIF-2 functions in the early steps of protein synthesis by forming a ternary complex with GTP and initiator tRNA. In Saccharolobus islandicus (strain Y.N.15.51 / Yellowstone #2) (Sulfolobus islandicus), this protein is Translation initiation factor 2 subunit beta.